A 146-amino-acid polypeptide reads, in one-letter code: Basic phospholipase A2 beta-bungarotoxin A2 chain (146 aa).

The signal sequence occupies residues 1–19 (MNPAHLLVLSAVCVSLLGA). A propeptide spanning residues 20–27 (SNIPPQSL) is cleaved from the precursor. 6 disulfides stabilise this stretch: Cys-54/Cys-145, Cys-56/Cys-72, Cys-71/Cys-126, Cys-78/Cys-119, Cys-87/Cys-112, and Cys-105/Cys-117. Ca(2+) is bound by residues Tyr-55, Gly-57, and Gly-59. The active site involves His-75. Residue Asp-76 coordinates Ca(2+). The active site involves Asp-120.

The protein belongs to the phospholipase A2 family. Group I subfamily. D49 sub-subfamily. In terms of assembly, heterodimer; disulfide-linked. The A chain has phospholipase A2 activity and the B chain shows homology with the basic protease inhibitors. It depends on Ca(2+) as a cofactor. Expressed by the venom gland.

The protein localises to the secreted. It catalyses the reaction a 1,2-diacyl-sn-glycero-3-phosphocholine + H2O = a 1-acyl-sn-glycero-3-phosphocholine + a fatty acid + H(+). In terms of biological role, snake venom phospholipase A2 (PLA2) that inhibits neuromuscular transmission by blocking acetylcholine release from the nerve termini. PLA2 catalyzes the calcium-dependent hydrolysis of the 2-acyl groups in 3-sn-phosphoglycerides. The sequence is that of Basic phospholipase A2 beta-bungarotoxin A2 chain from Bungarus flaviceps flaviceps (Red-headed krait).